The following is a 307-amino-acid chain: MTNKAHSQGSKKTIQGSMPAIVTPMFEDGSLDYPGLRALLDWHVSEGSDGIVIVGTSGESPTVSVEEHCELIRVTVEQIAGRIPVIAGTGGNSTQEAIELTHFAKKVGADASLQVVPYYNKPTQEGMYAHFKKIAESVDLPVILYNVPGRTVADMAGDTVVRLAGVPGIIGIKDATGSLERGTLLINDLKRAGHHEFSVFSGDDLTAAMLMLMGGHGNISVTANVAPRLMHELCVAAMSDDVKRTREIQYQLIAVHKAMFIEANPIPVKWALHEMGKITAGIRLPLTPLSSSLREPLKAALKQANLL.

Residue serine 57 coordinates pyruvate. Tyrosine 145 serves as the catalytic Proton donor/acceptor. Residue lysine 173 is the Schiff-base intermediate with substrate of the active site. Isoleucine 219 lines the pyruvate pocket.

The protein belongs to the DapA family. In terms of assembly, homotetramer; dimer of dimers.

It localises to the cytoplasm. It carries out the reaction L-aspartate 4-semialdehyde + pyruvate = (2S,4S)-4-hydroxy-2,3,4,5-tetrahydrodipicolinate + H2O + H(+). It participates in amino-acid biosynthesis; L-lysine biosynthesis via DAP pathway; (S)-tetrahydrodipicolinate from L-aspartate: step 3/4. Functionally, catalyzes the condensation of (S)-aspartate-beta-semialdehyde [(S)-ASA] and pyruvate to 4-hydroxy-tetrahydrodipicolinate (HTPA). This chain is 4-hydroxy-tetrahydrodipicolinate synthase, found in Polynucleobacter asymbioticus (strain DSM 18221 / CIP 109841 / QLW-P1DMWA-1) (Polynucleobacter necessarius subsp. asymbioticus).